A 208-amino-acid polypeptide reads, in one-letter code: Large ribosomal subunit protein uL4 (208 aa).

Residues 58–77 (RGGGRKPWRQKGTGRARQGS) are disordered. A compositionally biased stretch (basic residues) spans 60–71 (GGRKPWRQKGTG).

The protein belongs to the universal ribosomal protein uL4 family. Part of the 50S ribosomal subunit.

Functionally, one of the primary rRNA binding proteins, this protein initially binds near the 5'-end of the 23S rRNA. It is important during the early stages of 50S assembly. It makes multiple contacts with different domains of the 23S rRNA in the assembled 50S subunit and ribosome. In terms of biological role, forms part of the polypeptide exit tunnel. This Caldicellulosiruptor bescii (strain ATCC BAA-1888 / DSM 6725 / KCTC 15123 / Z-1320) (Anaerocellum thermophilum) protein is Large ribosomal subunit protein uL4.